The primary structure comprises 79 residues: Small ribosomal subunit protein bS18 (79 aa).

In terms of assembly, part of the 30S ribosomal subunit. Forms a tight heterodimer with protein bS6. Both N-terminus methionine truncation and retention have been observed for this protein. In terms of processing, may be methylated up to 6 times, on undetermined residues.

In terms of biological role, binds as a heterodimer with protein bS6 to the central domain of the 16S rRNA, where it helps stabilize the platform of the 30S subunit. This Rhodopseudomonas palustris (strain ATCC BAA-98 / CGA009) protein is Small ribosomal subunit protein bS18.